Here is a 218-residue protein sequence, read N- to C-terminus: MIDFFEGVSWLIMPFSGVCVREADSSPMDVFGLWYSEMLRATGAHMREPSAMVLATCDVQNRPSARVVLLKKYGEAGFEFVTNFNSRKGREIADNPQVALVFDWRHIGRQVRVEGLATLMDASESDAYHASRSRESKISAWCSQQSAVLESRKLLLEQFERERQRFDGQEIPRPGHWGGVRVVPHVVEFWEDGAHRLHSRKQYSRGDSGSWSCVDLYP.

FMN contacts are provided by residues 66 to 71 (RVVLLK), arginine 87, lysine 88, and glutamine 110. Residue lysine 71 participates in substrate binding. Substrate contacts are provided by tyrosine 128, arginine 132, and serine 136. FMN is bound by residues 145 to 146 (QS) and tryptophan 190. 196–198 (RLH) contributes to the substrate binding site. Arginine 200 lines the FMN pocket.

Belongs to the pyridoxamine 5'-phosphate oxidase family. As to quaternary structure, homodimer. FMN serves as cofactor.

It catalyses the reaction pyridoxamine 5'-phosphate + O2 + H2O = pyridoxal 5'-phosphate + H2O2 + NH4(+). It carries out the reaction pyridoxine 5'-phosphate + O2 = pyridoxal 5'-phosphate + H2O2. It participates in cofactor metabolism; pyridoxal 5'-phosphate salvage; pyridoxal 5'-phosphate from pyridoxamine 5'-phosphate: step 1/1. Its pathway is cofactor metabolism; pyridoxal 5'-phosphate salvage; pyridoxal 5'-phosphate from pyridoxine 5'-phosphate: step 1/1. Catalyzes the oxidation of either pyridoxine 5'-phosphate (PNP) or pyridoxamine 5'-phosphate (PMP) into pyridoxal 5'-phosphate (PLP). The protein is Pyridoxine/pyridoxamine 5'-phosphate oxidase of Anaplasma marginale (strain St. Maries).